Here is a 244-residue protein sequence, read N- to C-terminus: Triosephosphate isomerase (244 aa).

9–11 (NWK) is a binding site for substrate. Histidine 93 (electrophile) is an active-site residue. Glutamate 161 serves as the catalytic Proton acceptor. Substrate contacts are provided by residues glycine 167, serine 206, and 227–228 (GG).

It belongs to the triosephosphate isomerase family. As to quaternary structure, homodimer.

The protein resides in the cytoplasm. It carries out the reaction D-glyceraldehyde 3-phosphate = dihydroxyacetone phosphate. It functions in the pathway carbohydrate biosynthesis; gluconeogenesis. It participates in carbohydrate degradation; glycolysis; D-glyceraldehyde 3-phosphate from glycerone phosphate: step 1/1. Functionally, involved in the gluconeogenesis. Catalyzes stereospecifically the conversion of dihydroxyacetone phosphate (DHAP) to D-glyceraldehyde-3-phosphate (G3P). The polypeptide is Triosephosphate isomerase (Deinococcus geothermalis (strain DSM 11300 / CIP 105573 / AG-3a)).